The primary structure comprises 198 residues: Holliday junction branch migration complex subunit RuvA (198 aa).

A domain I region spans residues Met-1–His-63. The domain II stretch occupies residues Ser-64–Pro-142. Positions Pro-143–Gln-147 are flexible linker. A domain III region spans residues Gln-148–Gly-198.

The protein belongs to the RuvA family. Homotetramer. Forms an RuvA(8)-RuvB(12)-Holliday junction (HJ) complex. HJ DNA is sandwiched between 2 RuvA tetramers; dsDNA enters through RuvA and exits via RuvB. An RuvB hexamer assembles on each DNA strand where it exits the tetramer. Each RuvB hexamer is contacted by two RuvA subunits (via domain III) on 2 adjacent RuvB subunits; this complex drives branch migration. In the full resolvosome a probable DNA-RuvA(4)-RuvB(12)-RuvC(2) complex forms which resolves the HJ.

It localises to the cytoplasm. In terms of biological role, the RuvA-RuvB-RuvC complex processes Holliday junction (HJ) DNA during genetic recombination and DNA repair, while the RuvA-RuvB complex plays an important role in the rescue of blocked DNA replication forks via replication fork reversal (RFR). RuvA specifically binds to HJ cruciform DNA, conferring on it an open structure. The RuvB hexamer acts as an ATP-dependent pump, pulling dsDNA into and through the RuvAB complex. HJ branch migration allows RuvC to scan DNA until it finds its consensus sequence, where it cleaves and resolves the cruciform DNA. This Streptococcus equi subsp. equi (strain 4047) protein is Holliday junction branch migration complex subunit RuvA.